The primary structure comprises 278 residues: Orotidine 5'-phosphate decarboxylase (278 aa).

The active-site Proton donor is lysine 95.

The protein belongs to the OMP decarboxylase family. Type 2 subfamily.

It carries out the reaction orotidine 5'-phosphate + H(+) = UMP + CO2. The protein operates within pyrimidine metabolism; UMP biosynthesis via de novo pathway; UMP from orotate: step 2/2. The sequence is that of Orotidine 5'-phosphate decarboxylase from Corynebacterium glutamicum (strain R).